The following is a 409-amino-acid chain: SPI-1 type 3 secretion system translocon protein SctB (409 aa).

A helical membrane pass occupies residues 119–140; the sequence is ISGMSSSAVALLAAANTLMLTL.

This sequence belongs to the SctB/SipC family. In terms of assembly, the core secretion machinery of the T3SS is composed of approximately 20 different proteins, including cytoplasmic components, a base, an export apparatus and a needle. This subunit is involved in the formation of a pore, called the translocon, in host membrane.

It localises to the secreted. The protein localises to the host membrane. Component of the type III secretion system 1 (SPI-1 T3SS), also called injectisome, which is used to inject bacterial effector proteins into eukaryotic host cells. SipB/SctE1 and SipC/SctB1 are inserted into the host membrane where they form a pore and allow the translocation of effector proteins into the cytosol of target cells. This Salmonella typhimurium (strain 14028s / SGSC 2262) protein is SPI-1 type 3 secretion system translocon protein SctB.